A 417-amino-acid polypeptide reads, in one-letter code: Multifunctional CCA protein (417 aa).

Gly8 and Arg11 together coordinate ATP. CTP is bound by residues Gly8 and Arg11. Residues Asp21 and Asp23 each contribute to the Mg(2+) site. 3 residues coordinate ATP: Arg91, Arg137, and Arg140. Positions 91, 137, and 140 each coordinate CTP. The HD domain maps to 225 to 326 (SGIHTLMTLQ…LNVLKKTDAF (102 aa)).

This sequence belongs to the tRNA nucleotidyltransferase/poly(A) polymerase family. Bacterial CCA-adding enzyme type 1 subfamily. As to quaternary structure, monomer. Can also form homodimers and oligomers. Requires Mg(2+) as cofactor. It depends on Ni(2+) as a cofactor.

It catalyses the reaction a tRNA precursor + 2 CTP + ATP = a tRNA with a 3' CCA end + 3 diphosphate. The catalysed reaction is a tRNA with a 3' CCA end + 2 CTP + ATP = a tRNA with a 3' CCACCA end + 3 diphosphate. Catalyzes the addition and repair of the essential 3'-terminal CCA sequence in tRNAs without using a nucleic acid template. Adds these three nucleotides in the order of C, C, and A to the tRNA nucleotide-73, using CTP and ATP as substrates and producing inorganic pyrophosphate. tRNA 3'-terminal CCA addition is required both for tRNA processing and repair. Also involved in tRNA surveillance by mediating tandem CCA addition to generate a CCACCA at the 3' terminus of unstable tRNAs. While stable tRNAs receive only 3'-terminal CCA, unstable tRNAs are marked with CCACCA and rapidly degraded. This Neisseria meningitidis serogroup C (strain 053442) protein is Multifunctional CCA protein.